The primary structure comprises 433 residues: Trigger factor (433 aa).

In terms of domain architecture, PPIase FKBP-type spans 165–250 (GDSAIIDFEG…LHNIQEKVKV (86 aa)).

Belongs to the FKBP-type PPIase family. Tig subfamily.

Its subcellular location is the cytoplasm. The catalysed reaction is [protein]-peptidylproline (omega=180) = [protein]-peptidylproline (omega=0). Involved in protein export. Acts as a chaperone by maintaining the newly synthesized protein in an open conformation. Functions as a peptidyl-prolyl cis-trans isomerase. This chain is Trigger factor, found in Sulfurimonas denitrificans (strain ATCC 33889 / DSM 1251) (Thiomicrospira denitrificans (strain ATCC 33889 / DSM 1251)).